Consider the following 329-residue polypeptide: Ketol-acid reductoisomerase (NADP(+)) (329 aa).

The 181-residue stretch at 2-182 (ARMYYEKDVD…GATRAGVLET (181 aa)) folds into the KARI N-terminal Rossmann domain. NADP(+) is bound by residues 25–28 (YGSQ), serine 51, serine 53, and 83–86 (DEKQ). Residue histidine 108 is part of the active site. Residue glycine 134 participates in NADP(+) binding. Positions 183-328 (TFKEETETDL…RNLRSMMSFL (146 aa)) constitute a KARI C-terminal knotted domain. Aspartate 191, glutamate 195, glutamate 227, and glutamate 231 together coordinate Mg(2+). Position 252 (serine 252) interacts with substrate.

The protein belongs to the ketol-acid reductoisomerase family. Requires Mg(2+) as cofactor.

It carries out the reaction (2R)-2,3-dihydroxy-3-methylbutanoate + NADP(+) = (2S)-2-acetolactate + NADPH + H(+). The enzyme catalyses (2R,3R)-2,3-dihydroxy-3-methylpentanoate + NADP(+) = (S)-2-ethyl-2-hydroxy-3-oxobutanoate + NADPH + H(+). Its pathway is amino-acid biosynthesis; L-isoleucine biosynthesis; L-isoleucine from 2-oxobutanoate: step 2/4. It participates in amino-acid biosynthesis; L-valine biosynthesis; L-valine from pyruvate: step 2/4. Its function is as follows. Involved in the biosynthesis of branched-chain amino acids (BCAA). Catalyzes an alkyl-migration followed by a ketol-acid reduction of (S)-2-acetolactate (S2AL) to yield (R)-2,3-dihydroxy-isovalerate. In the isomerase reaction, S2AL is rearranged via a Mg-dependent methyl migration to produce 3-hydroxy-3-methyl-2-ketobutyrate (HMKB). In the reductase reaction, this 2-ketoacid undergoes a metal-dependent reduction by NADPH to yield (R)-2,3-dihydroxy-isovalerate. This is Ketol-acid reductoisomerase (NADP(+)) from Clostridioides difficile (strain 630) (Peptoclostridium difficile).